Consider the following 135-residue polypeptide: Galectin-1 (135 aa).

Residue A2 is modified to N-acetylalanine. A Galectin domain is found at 4 to 135 (GLVASNLNLK…DFKIKCVAFD (132 aa)). K13 and K29 each carry N6-acetyllysine. A Phosphoserine; by FAM20C modification is found at S30. Residues 45–49 (HFNPR), H53, N62, and 69–72 (WGTE) contribute to the a beta-D-galactoside site. An N6-acetyllysine; alternate modification is found at K108. K108 carries the N6-succinyllysine; alternate modification. K128 is modified (N6-acetyllysine).

In terms of assembly, homodimer. Binds LGALS3BP. Interacts with CD2, CD3, CD4, CD6, CD7, CD43, ALCAM and CD45. Interacts with laminin (via poly-N-acetyllactosamine). Interacts with SUSD2. Interacts with cargo receptor TMED10; the interaction mediates the translocation from the cytoplasm into the ERGIC (endoplasmic reticulum-Golgi intermediate compartment) and thereby secretion. Interacts with CD69. In terms of tissue distribution, expressed in placenta, maternal decidua and fetal membranes. Within placenta, expressed in trophoblasts, stromal cells, villous endothelium, syncytiotrophoblast apical membrane and villous stroma. Within fetal membranes, expressed in amnion, chorioamniotic mesenchyma and chorion (at protein level). Expressed in cardiac, smooth, and skeletal muscle, neurons, thymus, kidney and hematopoietic cells.

The protein localises to the secreted. The protein resides in the extracellular space. It localises to the extracellular matrix. Its subcellular location is the cytoplasm. Lectin that binds beta-galactoside and a wide array of complex carbohydrates. Plays a role in regulating apoptosis, cell proliferation and cell differentiation. Inhibits CD45 protein phosphatase activity and therefore the dephosphorylation of Lyn kinase. Strong inducer of T-cell apoptosis. Plays a negative role in Th17 cell differentiation via activation of the receptor CD69. This is Galectin-1 from Homo sapiens (Human).